The following is a 138-amino-acid chain: Putative pre-16S rRNA nuclease (138 aa).

The protein belongs to the YqgF nuclease family.

Its subcellular location is the cytoplasm. Its function is as follows. Could be a nuclease involved in processing of the 5'-end of pre-16S rRNA. This chain is Putative pre-16S rRNA nuclease, found in Mycoplasma genitalium (strain ATCC 33530 / DSM 19775 / NCTC 10195 / G37) (Mycoplasmoides genitalium).